Consider the following 283-residue polypeptide: MLIIETLPLLRQQIRRLRMEGKRVALVPTMGNLHDGHMKLVDEAKARADVVVVSIFVNPMQFDRPEDLARYPRTLQEDCEKLNKRKVDLVFAPSVKEIYPNGTETHTYVDVPGLSTMLEGASRPGHFRGVSTIVSKLFNLVQPDIACFGEKDFQQLALIRKMVADMGFDIEIVGVPIMRAKDGLALSSRNGYLTAEQRKIAPGLYKVLSSIADKLQAGERDLDEIITIAGQELNEKGFRADDIQIRDADTLLEVSETSKRAVILVAAWLGDARLIDNKMVELA.

ATP is bound at residue 30-37 (MGNLHDGH). Residue histidine 37 is the Proton donor of the active site. Glutamine 61 is a binding site for (R)-pantoate. Glutamine 61 is a beta-alanine binding site. 149-152 (GEKD) contributes to the ATP binding site. Position 155 (glutamine 155) interacts with (R)-pantoate. ATP contacts are provided by residues methionine 178 and 186-189 (LSSR).

Belongs to the pantothenate synthetase family. In terms of assembly, homodimer.

It is found in the cytoplasm. It catalyses the reaction (R)-pantoate + beta-alanine + ATP = (R)-pantothenate + AMP + diphosphate + H(+). It participates in cofactor biosynthesis; (R)-pantothenate biosynthesis; (R)-pantothenate from (R)-pantoate and beta-alanine: step 1/1. With respect to regulation, activation requires a combination of a divalent cation, magnesium or manganese, and a monovalent cation, potassium or ammonium. Above the optimum concentration for activation, magnesium and manganese are rather inhibitory. Also activated by 2-mercaptoethanol, dithiothreitol, cysteine and glutathione. Inhibited by divalent cations (mercury, cobalt, zinc, copper, silver), chelating agents (EDTA, EGTA and o-phenanthroline), and analogs of beta-alanine (taurine, gamma-aminobutyrate, gamma-amino-beta-hydroxybutyrate). Functionally, catalyzes the condensation of pantoate with beta-alanine in an ATP-dependent reaction via a pantoyl-adenylate intermediate. The polypeptide is Pantothenate synthetase (panC) (Escherichia coli (strain K12)).